A 661-amino-acid polypeptide reads, in one-letter code: SUMO-activating enzyme subunit 2 (661 aa).

ATP contacts are provided by residues 29–34 (GAGGIG), Asp-53, 61–64 (NLNR), Lys-77, and 122–127 (DNISAR). Residues Cys-163 and Cys-166 each contribute to the Zn(2+) site. The Glycyl thioester intermediate role is filled by Cys-178. The Zn(2+) site is built by Cys-436 and Cys-439. A disordered region spans residues 545-661 (KKQQQKEKDQ…SKKLKSNLQD (117 aa)). Residues 548 to 563 (QQKEKDQKEGKTTTIE) show a composition bias toward basic and acidic residues. Composition is skewed to low complexity over residues 577 to 607 (TSQTTTTTTTTTTTTESDNNSNNNKNNNNNN) and 623 to 634 (SSTTTSSATPSI).

The protein belongs to the ubiquitin-activating E1 family. As to quaternary structure, heterodimer of sae1 and sae2. The complex binds sumo via sae2.

It is found in the nucleus. Its pathway is protein modification; protein sumoylation. The dimeric enzyme acts as an E1 ligase for sumo. It mediates ATP-dependent activation of sumo and formation of a thioester with a conserved cysteine residue on sae2. This Dictyostelium discoideum (Social amoeba) protein is SUMO-activating enzyme subunit 2 (uba2).